The primary structure comprises 351 residues: Mannonate dehydratase (351 aa).

This sequence belongs to the mannonate dehydratase family. Fe(2+) serves as cofactor. Requires Mn(2+) as cofactor.

It carries out the reaction D-mannonate = 2-dehydro-3-deoxy-D-gluconate + H2O. Its pathway is carbohydrate metabolism; pentose and glucuronate interconversion. Functionally, catalyzes the dehydration of D-mannonate. This chain is Mannonate dehydratase, found in Clostridium acetobutylicum (strain ATCC 824 / DSM 792 / JCM 1419 / IAM 19013 / LMG 5710 / NBRC 13948 / NRRL B-527 / VKM B-1787 / 2291 / W).